Reading from the N-terminus, the 263-residue chain is Methylesterase 18 (263 aa).

The active-site Acyl-ester intermediate is the S80. Residues D212 and H240 each act as charge relay system in the active site.

This sequence belongs to the AB hydrolase superfamily. Methylesterase family.

It catalyses the reaction methyl (indol-3-yl)acetate + H2O = (indol-3-yl)acetate + methanol + H(+). The protein operates within plant hormone biosynthesis. Functionally, methylesterase shown to have methyl indole-3-acetic acid (MeIAA) esterase activity in vitro. The polypeptide is Methylesterase 18 (Arabidopsis thaliana (Mouse-ear cress)).